A 1162-amino-acid polypeptide reads, in one-letter code: MPKRTDIKSILIIGAGPIVIGQACEFDYSGTQACKALKEEGYRIILVNSNPATIMTDPDLADATYIEPITPEVVAKIIAKERPDAILPTMGGQTALNTALSLRRMGVLERYNVEMIGAKAEAIDKAEDRALFREAMKKIGLDTPGSMFANATEIKDEDRKRHEVKRAEVKAQFSGDELDKALDKLETEWQLGEVERKQRYMSHALAKAAQALDVVGLPAIIRPSFTLGGTGGGIAYNRQEFFEIIERGLDASPTTEVLIEESVLGWKEYEMEVVRDHADNCIIICSIENLDPMGVHTGDSITVAPALTLTDKEYQIMRNASIAVLREIGVETGGSNVQFAINPANGRMIVIEMNPRVSRSSALASKATGFPIAKVAAKLAVGYTLDELDNDITGGATPASFEPSIDYVVTKIPRFAFEKFPGSSPILTTAMKSVGEVMAIGRTFQESLQKALRGLETGLTGFDEIAIPNIEEGDEKNAIRAAIGTPTPDRLRMVAQAMRLGLSVEQVHDASKIDPWFLEQIESIVKTEERIREHGLPQDAENLRMLKAMGFSDARLASLTAKDAEDVAKLRADLDVHPVYKRIDTCAAEFASPTAYMYSTYETPFVGQPRSEAEVSDRKKVVILGGGPNRIGQGIEFDYCCCHAAFALGDADYEAIMVNCNPETVSTDYDTSDRLYFEPLTAEDVLEILRVEKQKGTLHGVIVQFGGQTPLKLANALEKAGIPILGTSPDAIDLAEDRDRFQKLLIKLDLNQPKNGIAYSVEQARLVAADLGFPLVVRPSYVLGGRAMQIIHDERGLQAYLLDTVPELVPEDIKAKYPNDKTGQINTLLGKNPLLFDTYLTEAIEVDVDCLCDGKDSLVAGIMEHIEEAGIHSGDSACLLPVHTLSPEIVAELERQTAALATALHVGGLMNVQFAIKDGEIFILEVNPRASRTVPFVAKTVGTPIAKVAARIMAGESLEAAFDAYGGKPQPTARPHIAVKEAVFPFARFPGVDTLLGPEMRSTGEVMGLDYDYALAFAKAQLGAGVELPREGTVFVSVRDEDKERVLGPVRKLASIGFKVMATGGTQKFLEANGVESTKINKVIEGRPHVEDAIRNRQIHLVFNTTDSASAVSDSKSIRRATLMQKLPYYTTMAGAESAAEAIAALKAGSLEVRPLQDYFRS.

Residues 1–456 (MPKRTDIKSI…SLQKALRGLE (456 aa)) form a carboxyphosphate synthetic domain region. The ATP site is built by Arg-129, Arg-222, Gly-228, Gly-229, Glu-261, Val-263, Glu-268, Gly-294, Val-295, His-296, Gln-338, and Glu-352. Residues 186–381 (ETEWQLGEVE…IAKVAAKLAV (196 aa)) form the ATP-grasp 1 domain. 3 residues coordinate Mg(2+): Gln-338, Glu-352, and Asn-354. The Mn(2+) site is built by Gln-338, Glu-352, and Asn-354. Positions 457–613 (TGLTGFDEIA…PFVGQPRSEA (157 aa)) are oligomerization domain. The segment at 614–1025 (EVSDRKKVVI…AFAKAQLGAG (412 aa)) is carbamoyl phosphate synthetic domain. The ATP-grasp 2 domain occupies 742-954 (QKLLIKLDLN…IAKVAARIMA (213 aa)). 10 residues coordinate ATP: Arg-778, Thr-838, Leu-840, Glu-845, Gly-870, Ile-871, His-872, Ser-873, Gln-913, and Glu-925. Residues Gln-913, Glu-925, and Asn-927 each contribute to the Mg(2+) site. Mn(2+) is bound by residues Gln-913, Glu-925, and Asn-927. In terms of domain architecture, MGS-like spans 1026-1162 (VELPREGTVF…VRPLQDYFRS (137 aa)). The interval 1026-1162 (VELPREGTVF…VRPLQDYFRS (137 aa)) is allosteric domain.

It belongs to the CarB family. Composed of two chains; the small (or glutamine) chain promotes the hydrolysis of glutamine to ammonia, which is used by the large (or ammonia) chain to synthesize carbamoyl phosphate. Tetramer of heterodimers (alpha,beta)4. Requires Mg(2+) as cofactor. It depends on Mn(2+) as a cofactor.

It carries out the reaction hydrogencarbonate + L-glutamine + 2 ATP + H2O = carbamoyl phosphate + L-glutamate + 2 ADP + phosphate + 2 H(+). The catalysed reaction is hydrogencarbonate + NH4(+) + 2 ATP = carbamoyl phosphate + 2 ADP + phosphate + 2 H(+). It functions in the pathway amino-acid biosynthesis; L-arginine biosynthesis; carbamoyl phosphate from bicarbonate: step 1/1. It participates in pyrimidine metabolism; UMP biosynthesis via de novo pathway; (S)-dihydroorotate from bicarbonate: step 1/3. In terms of biological role, large subunit of the glutamine-dependent carbamoyl phosphate synthetase (CPSase). CPSase catalyzes the formation of carbamoyl phosphate from the ammonia moiety of glutamine, carbonate, and phosphate donated by ATP, constituting the first step of 2 biosynthetic pathways, one leading to arginine and/or urea and the other to pyrimidine nucleotides. The large subunit (synthetase) binds the substrates ammonia (free or transferred from glutamine from the small subunit), hydrogencarbonate and ATP and carries out an ATP-coupled ligase reaction, activating hydrogencarbonate by forming carboxy phosphate which reacts with ammonia to form carbamoyl phosphate. The sequence is that of Carbamoyl phosphate synthase large chain from Brucella melitensis biotype 1 (strain ATCC 23456 / CCUG 17765 / NCTC 10094 / 16M).